A 123-amino-acid chain; its full sequence is Protein Wnt-3a (123 aa).

The O-palmitoleoyl serine moiety is linked to residue S1. C89 and C104 are oxidised to a cystine. N90 carries N-linked (GlcNAc...) asparagine glycosylation.

This sequence belongs to the Wnt family. In terms of processing, disulfide bonds have critical and distinct roles in secretion and activity. Loss of each conserved cysteine results in high molecular weight oxidized Wnt oligomers, which are formed through inter-Wnt disulfide bonding. Palmitoleoylation is required for efficient binding to frizzled receptors. Depalmitoleoylation leads to Wnt signaling pathway inhibition.

The protein resides in the secreted. It is found in the extracellular space. The protein localises to the extracellular matrix. Functionally, ligand for members of the frizzled family of seven transmembrane receptors. Functions in the canonical Wnt signaling pathway that results in activation of transcription factors of the TCF/LEF family. Required for normal embryonic mesoderm development and formation of caudal somites. Required for normal morphogenesis of the developing neural tube. This is Protein Wnt-3a (WNT3A) from Meleagris gallopavo (Wild turkey).